Reading from the N-terminus, the 448-residue chain is Homogentisate 1,2-dioxygenase (448 aa).

The disordered stretch occupies residues 1–26; it reads MNMLAPAAKNAFTPASPDRPAYQSGF. Catalysis depends on His-302, which acts as the Proton acceptor. Fe cation contacts are provided by His-345 and Glu-351. Tyr-360 and His-381 together coordinate homogentisate. Residue His-381 coordinates Fe cation.

Belongs to the homogentisate dioxygenase family. In terms of assembly, hexamer; dimer of trimers. Requires Fe cation as cofactor.

It catalyses the reaction homogentisate + O2 = 4-maleylacetoacetate + H(+). It participates in amino-acid degradation; L-phenylalanine degradation; acetoacetate and fumarate from L-phenylalanine: step 4/6. Its function is as follows. Involved in the catabolism of homogentisate (2,5-dihydroxyphenylacetate or 2,5-OH-PhAc), a central intermediate in the degradation of phenylalanine and tyrosine. Catalyzes the oxidative ring cleavage of the aromatic ring of homogentisate to yield maleylacetoacetate. The polypeptide is Homogentisate 1,2-dioxygenase (Ralstonia nicotianae (strain ATCC BAA-1114 / GMI1000) (Ralstonia solanacearum)).